Reading from the N-terminus, the 1192-residue chain is Protein FAM83H (1192 aa).

5 disordered regions span residues 435–542 (EGMG…VKQG), 557–661 (DGGE…LAEP), 695–720 (SKLE…ESEP), 737–1082 (LSRE…SNII), and 1094–1145 (ILEQ…ERDN). The segment covering 437 to 447 (MGHDDRGHYDR) has biased composition (basic and acidic residues). Composition is skewed to polar residues over residues 523–538 (QLFS…QDPS) and 629–652 (SDLG…ASST). Composition is skewed to basic and acidic residues over residues 737 to 759 (LSRE…KHAS) and 768 to 789 (DTKE…EENK). The segment covering 790-810 (VTQPTVPSASQQITSSLNMND) has biased composition (polar residues). Positions 820-834 (DQQEKRKTSKLELDL) are enriched in basic and acidic residues. A compositionally biased stretch (polar residues) spans 861-878 (TSEQSTVKAQEPTVSQTD). Composition is skewed to basic and acidic residues over residues 880 to 892 (VPHR…KPKP) and 914 to 925 (APKKEPVKEPTK). The segment covering 926 to 946 (SLKPFPSPKFLKPFKSSQSSS) has biased composition (low complexity). A compositionally biased stretch (basic and acidic residues) spans 994 to 1005 (ESKDTKALDFLK). The span at 1068–1082 (KPTTSRYQSSTSNII) shows a compositional bias: polar residues. Basic and acidic residues predominate over residues 1107-1122 (QQNEESGKGDGGKDDV).

Belongs to the FAM83 family.

The protein localises to the cytoplasm. The protein resides in the cytoskeleton. May play a role in keratin cytoskeleton disassembly. The polypeptide is Protein FAM83H (Danio rerio (Zebrafish)).